The following is a 443-amino-acid chain: ATP-dependent protease ATPase subunit HslU (443 aa).

ATP contacts are provided by residues Ile-18, 60 to 65, Asp-256, Glu-321, and Arg-393; that span reads GVGKTE.

The protein belongs to the ClpX chaperone family. HslU subfamily. In terms of assembly, a double ring-shaped homohexamer of HslV is capped on each side by a ring-shaped HslU homohexamer. The assembly of the HslU/HslV complex is dependent on binding of ATP.

The protein resides in the cytoplasm. Its function is as follows. ATPase subunit of a proteasome-like degradation complex; this subunit has chaperone activity. The binding of ATP and its subsequent hydrolysis by HslU are essential for unfolding of protein substrates subsequently hydrolyzed by HslV. HslU recognizes the N-terminal part of its protein substrates and unfolds these before they are guided to HslV for hydrolysis. The chain is ATP-dependent protease ATPase subunit HslU from Citrobacter koseri (strain ATCC BAA-895 / CDC 4225-83 / SGSC4696).